A 1145-amino-acid polypeptide reads, in one-letter code: Major DNA-binding protein (1145 aa).

Residues Ala-1115–Leu-1145 form a required for nuclear localization region.

The protein belongs to the herpesviridae major DNA-binding protein family. Homooligomers. Forms double-helical filaments necessary for the formation of replication compartments within the host nucleus. Interacts with the origin-binding protein. Interacts with the helicase primase complex; this interaction stimulates primer synthesis activity of the helicase-primase complex. Interacts with the DNA polymerase. Interacts with the alkaline exonuclease; this interaction increases its nuclease processivity.

It is found in the host nucleus. Plays several crucial roles in viral infection. Participates in the opening of the viral DNA origin to initiate replication by interacting with the origin-binding protein. May disrupt loops, hairpins and other secondary structures present on ssDNA to reduce and eliminate pausing of viral DNA polymerase at specific sites during elongation. Promotes viral DNA recombination by performing strand-transfer, characterized by the ability to transfer a DNA strand from a linear duplex to a complementary single-stranded DNA circle. Can also catalyze the renaturation of complementary single strands. Additionally, reorganizes the host cell nucleus, leading to the formation of prereplicative sites and replication compartments. This process is driven by the protein which can form double-helical filaments in the absence of DNA. The sequence is that of Major DNA-binding protein from Equus caballus (Horse).